A 251-amino-acid chain; its full sequence is 5'-nucleotidase SurE (251 aa).

Residues D8, D9, S39, and N95 each contribute to the a divalent metal cation site.

It belongs to the SurE nucleotidase family. Requires a divalent metal cation as cofactor.

The protein localises to the cytoplasm. It catalyses the reaction a ribonucleoside 5'-phosphate + H2O = a ribonucleoside + phosphate. Functionally, nucleotidase that shows phosphatase activity on nucleoside 5'-monophosphates. The polypeptide is 5'-nucleotidase SurE (Clostridium botulinum (strain Eklund 17B / Type B)).